We begin with the raw amino-acid sequence, 358 residues long: Ribosomal RNA large subunit methyltransferase M (358 aa).

Residues serine 183, alanine 216–glycine 219, aspartate 235, aspartate 255, and aspartate 271 each bind S-adenosyl-L-methionine. Lysine 300 (proton acceptor) is an active-site residue.

The protein belongs to the class I-like SAM-binding methyltransferase superfamily. RNA methyltransferase RlmE family. RlmM subfamily. In terms of assembly, monomer.

The protein resides in the cytoplasm. It catalyses the reaction cytidine(2498) in 23S rRNA + S-adenosyl-L-methionine = 2'-O-methylcytidine(2498) in 23S rRNA + S-adenosyl-L-homocysteine + H(+). Functionally, catalyzes the 2'-O-methylation at nucleotide C2498 in 23S rRNA. The polypeptide is Ribosomal RNA large subunit methyltransferase M (Pseudomonas fluorescens (strain SBW25)).